The chain runs to 460 residues: MVKEYKTITQIAGPLVFVEKTEPVGYKEIVTINLPDGTTRRGEVLDSSSDIVVIQIFEGTTGLDKECGVVFTGETLKLPASIDLLGRILSGSGEPLDGGPRIVPDQLLDINGAAMNPYARLPPKDFIQTGISTIDGTNTLVRGQKLPIFSASGLPHNEIALQIARQAAVPGSESAFAVVFAAMGITNEEAQYFMSDFEKTGALERAVVFLNLADDPAVERIVTPRMALTAAEYLAYEHGMHVLVILTDITNYAEALRQMGAARNEIPGRRGYPGYMYTDLATLYERAGIVKGAKGSVTQIPILSMPGDDITHPIPDLSGYITEGQIVVSRELHRKGIYPPINVLPSLSRLMNSGIGAGKTREDHKAVSDQMYAGYAEGRDLRGLVAIVGKEALSERDVKFLEFADLFEQQFVTQGRNENRTIADTLDIGWKILAHLPENQLGRIDNKYIQKYHPAHRKGQ.

The protein belongs to the ATPase alpha/beta chains family. In terms of assembly, has multiple subunits with at least A(3), B(3), C, D, E, F, H, I and proteolipid K(x).

The protein localises to the cell membrane. In terms of biological role, component of the A-type ATP synthase that produces ATP from ADP in the presence of a proton gradient across the membrane. The B chain is a regulatory subunit. This chain is A-type ATP synthase subunit B, found in Methanosarcina barkeri.